The primary structure comprises 331 residues: MNFLQVAQEVIDGKIISNEEALAILNSKDDELLQLMDGAFAIRRHYYGKKVKLNMIMNAKSGYCPEDCGYCSQSSKSTAPIEKYPFITKEEILAGAKRAFDNKIGTYCIVASGRGPTRKDVNVVSEAVVEIKEKYGLKVCACLGLLKEEQAQQLKEAGVDRYNHNLNTSERHHSFITTSHTYEDRVNTVEIVKKHGISPCSGAIIGMKETKEDVVNIARALHQLDADSIPVNFLNAIDGTKLEGTKDLNPRYCLKVLALFRYINPTKEIRISGGREINLGCLQPLGLYAANSIFVGDYLTTAGQEANSDYRMLEDLGFEIELTQKQEAAFC.

The Radical SAM core domain occupies 46–275; it reads YYGKKVKLNM…TKEIRISGGR (230 aa). Cysteine 64, cysteine 68, and cysteine 71 together coordinate [4Fe-4S] cluster. [2Fe-2S] cluster is bound by residues cysteine 108, cysteine 140, cysteine 200, and arginine 270.

The protein belongs to the radical SAM superfamily. Biotin synthase family. As to quaternary structure, homodimer. It depends on [4Fe-4S] cluster as a cofactor. Requires [2Fe-2S] cluster as cofactor.

It carries out the reaction (4R,5S)-dethiobiotin + (sulfur carrier)-SH + 2 reduced [2Fe-2S]-[ferredoxin] + 2 S-adenosyl-L-methionine = (sulfur carrier)-H + biotin + 2 5'-deoxyadenosine + 2 L-methionine + 2 oxidized [2Fe-2S]-[ferredoxin]. It functions in the pathway cofactor biosynthesis; biotin biosynthesis; biotin from 7,8-diaminononanoate: step 2/2. In terms of biological role, catalyzes the conversion of dethiobiotin (DTB) to biotin by the insertion of a sulfur atom into dethiobiotin via a radical-based mechanism. This chain is Biotin synthase, found in Lysinibacillus sphaericus (strain C3-41).